A 107-amino-acid polypeptide reads, in one-letter code: MSIRRAMSTTASKEWRDYFMSTHFWGPVANWGIPVAALADTQKSPKFISGKMTLALTLYSCIFMRFAYKVQPRNWLLFACHATNATAQSIQGLRFLHYNYGSKEQQA.

The next 2 helical transmembrane spans lie at 18 to 39 and 52 to 68; these read YFMS…AALA and MTLA…RFAY.

It belongs to the mitochondrial pyruvate carrier (MPC) (TC 2.A.105) family. The functional 150 kDa pyruvate import complex is a heteromer of MPC1 and MPC2.

Its subcellular location is the mitochondrion inner membrane. Mediates the uptake of pyruvate into mitochondria. This is Mitochondrial pyruvate carrier 1 (Mpc1) from Drosophila melanogaster (Fruit fly).